The primary structure comprises 155 residues: UPF0225 protein PC1_1977 (155 aa).

This sequence belongs to the UPF0225 family.

This Pectobacterium carotovorum subsp. carotovorum (strain PC1) protein is UPF0225 protein PC1_1977.